Consider the following 572-residue polypeptide: Thiamine biosynthesis protein THI22 (572 aa).

The signal sequence occupies residues 1–19; the sequence is MVIILLGLCTLGFPRTAFC.

It belongs to the thiaminase-2 family.

The protein localises to the secreted. Its function is as follows. Is not required for thiamine biosynthesis. The protein is Thiamine biosynthesis protein THI22 (THI22) of Saccharomyces cerevisiae (strain ATCC 204508 / S288c) (Baker's yeast).